Reading from the N-terminus, the 201-residue chain is Large ribosomal subunit protein uL4 (201 aa).

The tract at residues 45–75 is disordered; the sequence is AQKSRSEVSGSGKKPWRQKGTGRARSGSLRS.

It belongs to the universal ribosomal protein uL4 family. In terms of assembly, part of the 50S ribosomal subunit.

One of the primary rRNA binding proteins, this protein initially binds near the 5'-end of the 23S rRNA. It is important during the early stages of 50S assembly. It makes multiple contacts with different domains of the 23S rRNA in the assembled 50S subunit and ribosome. Its function is as follows. Forms part of the polypeptide exit tunnel. In Buchnera aphidicola subsp. Cinara cedri (strain Cc), this protein is Large ribosomal subunit protein uL4.